Here is a 475-residue protein sequence, read N- to C-terminus: Peroxisome proliferator-activated receptor gamma (475 aa).

Ser-82 carries the post-translational modification Phosphoserine; by MAPK. A DNA-binding region (nuclear receptor) is located at residues 106–180 (AIECRVCSDK…VGMSHNAIRF (75 aa)). NR C4-type zinc fingers lie at residues 109–129 (CRVCSDKASGFHYGVHACEGC) and 146–168 (CDLNCRIHKKSRNKCQYCRFQKC). The interval 175-250 (HNAIRFGRMP…DKSPFVIYDM (76 aa)) is interaction with FAM120B. Residues 208–473 (DLRALAKHLY…HPLLQEIYKD (266 aa)) form the NR LBD domain. Lys-222 is covalently cross-linked (Glycyl lysine isopeptide (Lys-Gly) (interchain with G-Cter in ubiquitin)). Positions 465 to 473 (PLLQEIYKD) match the 9aaTAD motif.

The protein belongs to the nuclear hormone receptor family. NR1 subfamily. As to quaternary structure, interacts with FOXO1 (acetylated form). Heterodimer with other nuclear receptors, such as RXRA. The heterodimer with the retinoic acid receptor RXRA is called adipocyte-specific transcription factor ARF6. Interacts with NCOA6 coactivator, leading to a strong increase in transcription of target genes. Interacts with coactivator PPARBP, leading to a mild increase in transcription of target genes. Interacts with NOCA7 in a ligand-inducible manner. Interacts with NCOA1 and NCOA2 LXXLL motifs. Interacts with ASXL1, ASXL2, DNTTIP2, FAM120B, MAP2K1/MEK1, NR0B2, PDPK1, PRDM16, PRMT2 and TGFB1I1. Interacts (when activated by agonist) with PPP5C. Interacts with HELZ2 and THRAP3; the interaction stimulates the transcriptional activity of PPARG. Interacts with PER2, the interaction is ligand dependent and blocks PPARG recruitment to target promoters. Interacts with NOCT. Interacts with ACTN4. Interacts (when in the liganded conformation) with GPS2. Interacts with CRY1 and CRY2 in a ligand-dependent manner. In the absence of hormonal ligand, interacts with TACC1. In macrophages, interacts with PAQR3 and STUB1; the interactions promote PPARG poylubiquitination and STUB1-mediated degradation. In terms of processing, phosphorylated at basal conditions and dephosphorylated when treated with the ligand. May be dephosphorylated by PPP5C. The phosphorylated form may be inactive and dephosphorylation induces adipogenic activity. Ubiquitinated by E3 ubiquitin-protein ligase complex containing FBXO9; leading to proteasomal degradation. Ubiquitinated at Lys-222 by TRIM55 leading to proteasomal degradation. Ubiquitinated by E3 ubiquitin-protein ligase STUB1/CHIP; leading to proteasomal degradation.

It is found in the nucleus. The protein resides in the cytoplasm. With respect to regulation, PDPK1 activates its transcriptional activity independently of its kinase activity. In terms of biological role, nuclear receptor that binds peroxisome proliferators such as hypolipidemic drugs and fatty acids. Once activated by a ligand, the nuclear receptor binds to DNA specific PPAR response elements (PPRE) and modulates the transcription of its target genes, such as acyl-CoA oxidase. It therefore controls the peroxisomal beta-oxidation pathway of fatty acids. Key regulator of adipocyte differentiation and glucose homeostasis. ARF6 acts as a key regulator of the tissue-specific adipocyte P2 (aP2) enhancer. Acts as a critical regulator of gut homeostasis by suppressing NF-kappa-B-mediated pro-inflammatory responses. Plays a role in the regulation of cardiovascular circadian rhythms by regulating the transcription of BMAL1 in the blood vessels. The protein is Peroxisome proliferator-activated receptor gamma (PPARG) of Oryctolagus cuniculus (Rabbit).